The primary structure comprises 268 residues: Glutamate 5-kinase (268 aa).

An ATP-binding site is contributed by Lys-15. Substrate is bound by residues Ser-55, Asp-142, and Asn-158. 178–179 contributes to the ATP binding site; that stretch reads SD.

It belongs to the glutamate 5-kinase family.

It localises to the cytoplasm. It carries out the reaction L-glutamate + ATP = L-glutamyl 5-phosphate + ADP. It functions in the pathway amino-acid biosynthesis; L-proline biosynthesis; L-glutamate 5-semialdehyde from L-glutamate: step 1/2. In terms of biological role, catalyzes the transfer of a phosphate group to glutamate to form L-glutamate 5-phosphate. The protein is Glutamate 5-kinase of Oenococcus oeni (strain ATCC BAA-331 / PSU-1).